Here is a 269-residue protein sequence, read N- to C-terminus: Putative aga operon transcriptional repressor (269 aa).

Positions 15-70 constitute an HTH deoR-type domain; that stretch reads TSERREQIIQRLRQQGSVQVNDLSALYGVSTVTIRNDLAFLEKQGIAVRAYGGALI. The segment at residues 32–51 is a DNA-binding region (H-T-H motif); that stretch reads VQVNDLSALYGVSTVTIRND.

Its function is as follows. Probable repressor for the aga operon for N-acetyl galactosamine transport and metabolism. The protein is Putative aga operon transcriptional repressor (agaR) of Escherichia coli O157:H7.